We begin with the raw amino-acid sequence, 223 residues long: Ubiquitin carboxyl-terminal hydrolase isozyme L1 (223 aa).

Residue Met1 is modified to N-acetylmethionine. Residues 2–221 enclose the UCH catalytic domain; that stretch reads QLKPMEINPE…VRFSAVALCK (220 aa). The tract at residues 5–10 is interaction with ubiquitin; it reads PMEINP. Cys90 acts as the Nucleophile in catalysis. Ser125 carries the phosphoserine modification. His161 functions as the Proton donor in the catalytic mechanism. The interaction with ubiquitin stretch occupies residues 211 to 216; that stretch reads EVRFSA. Cys220 carries the S-farnesyl cysteine lipid modification. The propeptide at 221 to 223 is removed in mature form; sequence KAA.

The protein belongs to the peptidase C12 family. In terms of assembly, monomer. Homodimer. Interacts with COPS5 and SNCA. Post-translationally, O-glycosylated. As to expression, expressed in brain, where it is found in neurons but not in oligodendrocytes or astrocytes. Found in the ganglion cell layer and the inner nuclear layer of the retina (at protein level). Expressed in brain and testis. In the brain, expression is at its lowest in replaceable neurons of hippocampus and olfactory bulb. Highly expressed in senescent pituitary. In skeletal muscle, primarily expressed in oxidative muscle fibers.

The protein resides in the cytoplasm. The protein localises to the endoplasmic reticulum membrane. The enzyme catalyses Thiol-dependent hydrolysis of ester, thioester, amide, peptide and isopeptide bonds formed by the C-terminal Gly of ubiquitin (a 76-residue protein attached to proteins as an intracellular targeting signal).. Functionally, deubiquitinase that plays a role in the regulation of several processes such as maintenance of synaptic function, cardiac function, inflammatory response or osteoclastogenesis. Abrogates the ubiquitination of multiple proteins including WWTR1/TAZ, EGFR, HIF1A and beta-site amyloid precursor protein cleaving enzyme 1/BACE1. In addition, recognizes and hydrolyzes a peptide bond at the C-terminal glycine of ubiquitin to maintain a stable pool of monoubiquitin that is a key requirement for the ubiquitin-proteasome and the autophagy-lysosome pathways. Regulates amyloid precursor protein/APP processing by promoting BACE1 degradation resulting in decreased amyloid beta production. Plays a role in the immune response by regulating the ability of MHC I molecules to reach cross-presentation compartments competent for generating Ag-MHC I complexes. Mediates the 'Lys-48'-linked deubiquitination of the transcriptional coactivator WWTR1/TAZ leading to its stabilization and inhibition of osteoclastogenesis. Deubiquitinates and stabilizes epidermal growth factor receptor EGFR to prevent its degradation and to activate its downstream mediators. Modulates oxidative activity in skeletal muscle by regulating key mitochondrial oxidative proteins. Enhances the activity of hypoxia-inducible factor 1-alpha/HIF1A by abrogateing its VHL E3 ligase-mediated ubiquitination and consequently inhibiting its degradation. The protein is Ubiquitin carboxyl-terminal hydrolase isozyme L1 (Uchl1) of Mus musculus (Mouse).